The chain runs to 280 residues: Energy-coupling factor transporter ATP-binding protein EcfA (280 aa).

In terms of domain architecture, ABC transporter spans 5–240 (IDVKNLTYKY…DEMLKLTGLE (236 aa)). ATP is bound at residue 40–47 (GHNGSGKS).

The protein belongs to the ABC transporter superfamily. Energy-coupling factor EcfA family. Forms a stable energy-coupling factor (ECF) transporter complex composed of 2 membrane-embedded substrate-binding proteins (S component), 2 ATP-binding proteins (A component) and 2 transmembrane proteins (T component).

Its subcellular location is the cell membrane. In terms of biological role, ATP-binding (A) component of a common energy-coupling factor (ECF) ABC-transporter complex. Unlike classic ABC transporters this ECF transporter provides the energy necessary to transport a number of different substrates. This chain is Energy-coupling factor transporter ATP-binding protein EcfA, found in Pediococcus pentosaceus (strain ATCC 25745 / CCUG 21536 / LMG 10740 / 183-1w).